The chain runs to 105 residues: Large ribosomal subunit protein uL24 (105 aa).

Belongs to the universal ribosomal protein uL24 family. In terms of assembly, part of the 50S ribosomal subunit.

Functionally, one of two assembly initiator proteins, it binds directly to the 5'-end of the 23S rRNA, where it nucleates assembly of the 50S subunit. In terms of biological role, one of the proteins that surrounds the polypeptide exit tunnel on the outside of the subunit. The chain is Large ribosomal subunit protein uL24 from Wolbachia pipientis wMel.